Here is a 331-residue protein sequence, read N- to C-terminus: Protein RecA (331 aa).

Gly61 to Thr68 serves as a coordination point for ATP.

Belongs to the RecA family.

The protein localises to the cytoplasm. Its function is as follows. Can catalyze the hydrolysis of ATP in the presence of single-stranded DNA, the ATP-dependent uptake of single-stranded DNA by duplex DNA, and the ATP-dependent hybridization of homologous single-stranded DNAs. It interacts with LexA causing its activation and leading to its autocatalytic cleavage. In Mycoplasma mobile (strain ATCC 43663 / 163K / NCTC 11711) (Mesomycoplasma mobile), this protein is Protein RecA.